The primary structure comprises 341 residues: Phosphate acyltransferase (341 aa).

The protein belongs to the PlsX family. In terms of assembly, homodimer. Probably interacts with PlsY.

It localises to the cytoplasm. It catalyses the reaction a fatty acyl-[ACP] + phosphate = an acyl phosphate + holo-[ACP]. It participates in lipid metabolism; phospholipid metabolism. Its function is as follows. Catalyzes the reversible formation of acyl-phosphate (acyl-PO(4)) from acyl-[acyl-carrier-protein] (acyl-ACP). This enzyme utilizes acyl-ACP as fatty acyl donor, but not acyl-CoA. The chain is Phosphate acyltransferase from Elusimicrobium minutum (strain Pei191).